The chain runs to 579 residues: Protein inscuteable homolog (579 aa).

An important for interaction with GPSM2 region spans residues 74–89; sequence SVQRWMEDLKLMTECE. Positions 576-579 match the PDZ-binding motif; that stretch reads ESFV.

As to quaternary structure, interacts with ALS2CR19/PAR3B and F2RL2/PAR3. Interacts with GPSM1/AGS3 and GPSM2/LGN (via TPR repeat region). Identified in a complex with GPSM2 and F2RL2. Isoform 1 is expressed in various tissues with stronger expression in liver, kidney and small intestine. Isoform 2 is abundantly expressed in small intestine and to a lower extent in lung and pancreas.

Its subcellular location is the cytoplasm. The protein localises to the cell cortex. Its function is as follows. May function as an adapter linking the Par3 complex to the GPSM1/GPSM2 complex. Involved in spindle orientation during mitosis. May regulate cell proliferation and differentiation in the developing nervous system. May play a role in the asymmetric division of fibroblasts and participate in the process of stratification of the squamous epithelium. The chain is Protein inscuteable homolog (INSC) from Homo sapiens (Human).